Reading from the N-terminus, the 217-residue chain is Growth hormone variant (217 aa).

The signal sequence occupies residues 1–26; sequence MAAGSWTCLILAIALLCLPWLQEGSA. Cystine bridges form between C79–C191 and C208–C215. Phosphoserine occurs at positions 132 and 176.

Belongs to the somatotropin/prolactin family. In terms of tissue distribution, expressed in the placenta.

The protein resides in the secreted. In terms of biological role, plays an important role in growth control. Its major role in stimulating body growth is to stimulate the liver and other tissues to secrete IGF1. It stimulates both the differentiation and proliferation of myoblasts. It also stimulates amino acid uptake and protein synthesis in muscle and other tissues. This chain is Growth hormone variant (GH2), found in Macaca mulatta (Rhesus macaque).